The primary structure comprises 269 residues: 4-hydroxy-tetrahydrodipicolinate reductase (269 aa).

NAD(+) is bound by residues 8 to 13 and glutamate 34; that span reads GAAGRM. Residue arginine 35 coordinates NADP(+). NAD(+)-binding positions include 98 to 100 and 122 to 125; these read GTT and APNY. Histidine 155 acts as the Proton donor/acceptor in catalysis. Residue histidine 156 participates in (S)-2,3,4,5-tetrahydrodipicolinate binding. Residue lysine 159 is the Proton donor of the active site. 165-166 is a (S)-2,3,4,5-tetrahydrodipicolinate binding site; the sequence is GT.

It belongs to the DapB family.

The protein localises to the cytoplasm. It carries out the reaction (S)-2,3,4,5-tetrahydrodipicolinate + NAD(+) + H2O = (2S,4S)-4-hydroxy-2,3,4,5-tetrahydrodipicolinate + NADH + H(+). The catalysed reaction is (S)-2,3,4,5-tetrahydrodipicolinate + NADP(+) + H2O = (2S,4S)-4-hydroxy-2,3,4,5-tetrahydrodipicolinate + NADPH + H(+). It functions in the pathway amino-acid biosynthesis; L-lysine biosynthesis via DAP pathway; (S)-tetrahydrodipicolinate from L-aspartate: step 4/4. Catalyzes the conversion of 4-hydroxy-tetrahydrodipicolinate (HTPA) to tetrahydrodipicolinate. The polypeptide is 4-hydroxy-tetrahydrodipicolinate reductase (Vibrio atlanticus (strain LGP32) (Vibrio splendidus (strain Mel32))).